The primary structure comprises 222 residues: Protein-L-isoaspartate O-methyltransferase (222 aa).

The active site involves S69.

It belongs to the methyltransferase superfamily. L-isoaspartyl/D-aspartyl protein methyltransferase family.

It is found in the cytoplasm. It carries out the reaction [protein]-L-isoaspartate + S-adenosyl-L-methionine = [protein]-L-isoaspartate alpha-methyl ester + S-adenosyl-L-homocysteine. Catalyzes the methyl esterification of L-isoaspartyl residues in peptides and proteins that result from spontaneous decomposition of normal L-aspartyl and L-asparaginyl residues. It plays a role in the repair and/or degradation of damaged proteins. The sequence is that of Protein-L-isoaspartate O-methyltransferase from Nitrosomonas eutropha (strain DSM 101675 / C91 / Nm57).